Reading from the N-terminus, the 563-residue chain is Eukaryotic translation initiation factor 3 subunit D-1 (563 aa).

The tract at residues 98–136 (VQKPPHQRGRFRNMRGRGGRGRNPRGGLNNHHHHGMTTL) is disordered. Basic residues predominate over residues 100–120 (KPPHQRGRFRNMRGRGGRGRN). The interval 291–305 (EFDLLTVNESSVEPP) is RNA gate.

This sequence belongs to the eIF-3 subunit D family. Component of the eukaryotic translation initiation factor 3 (eIF-3) complex. The eIF-3 complex interacts with pix.

The protein localises to the cytoplasm. Functionally, mRNA cap-binding component of the eukaryotic translation initiation factor 3 (eIF-3) complex, which is involved in protein synthesis of a specialized repertoire of mRNAs and, together with other initiation factors, stimulates binding of mRNA and methionyl-tRNAi to the 40S ribosome. The eIF-3 complex specifically targets and initiates translation of a subset of mRNAs involved in cell proliferation. In the eIF-3 complex, eif3d specifically recognizes and binds the 7-methylguanosine cap of a subset of mRNAs. This Drosophila pseudoobscura pseudoobscura (Fruit fly) protein is Eukaryotic translation initiation factor 3 subunit D-1.